We begin with the raw amino-acid sequence, 114 residues long: Holo-[acyl-carrier-protein] synthase (114 aa).

Mg(2+) contacts are provided by Asp8 and Glu58.

Belongs to the P-Pant transferase superfamily. AcpS family. Requires Mg(2+) as cofactor.

The protein resides in the cytoplasm. The catalysed reaction is apo-[ACP] + CoA = holo-[ACP] + adenosine 3',5'-bisphosphate + H(+). Transfers the 4'-phosphopantetheine moiety from coenzyme A to a Ser of acyl-carrier-protein. This is Holo-[acyl-carrier-protein] synthase from Mycoplasma genitalium (strain ATCC 33530 / DSM 19775 / NCTC 10195 / G37) (Mycoplasmoides genitalium).